The chain runs to 1043 residues: Probable inorganic carbon transporter subunit DabA (1043 aa).

The Zn(2+) site is built by cysteine 460, aspartate 462, histidine 719, and cysteine 734.

Belongs to the inorganic carbon transporter (TC 9.A.2) DabA family. In terms of assembly, forms a complex with DabB. Requires Zn(2+) as cofactor.

The protein localises to the cell inner membrane. Functionally, part of an energy-coupled inorganic carbon pump. This chain is Probable inorganic carbon transporter subunit DabA, found in Thiobacillus denitrificans (strain ATCC 25259 / T1).